The primary structure comprises 298 residues: UDP-N-acetylenolpyruvoylglucosamine reductase (298 aa).

In terms of domain architecture, FAD-binding PCMH-type spans 26–190 (RAGGPAERLY…VAAVLDLEPG (165 aa)). The active site involves Arg170. Ser219 serves as the catalytic Proton donor. The active site involves Glu289.

The protein belongs to the MurB family. FAD is required as a cofactor.

Its subcellular location is the cytoplasm. The catalysed reaction is UDP-N-acetyl-alpha-D-muramate + NADP(+) = UDP-N-acetyl-3-O-(1-carboxyvinyl)-alpha-D-glucosamine + NADPH + H(+). It functions in the pathway cell wall biogenesis; peptidoglycan biosynthesis. Cell wall formation. This chain is UDP-N-acetylenolpyruvoylglucosamine reductase, found in Alkalilimnicola ehrlichii (strain ATCC BAA-1101 / DSM 17681 / MLHE-1).